Reading from the N-terminus, the 215-residue chain is Large ribosomal subunit protein uL3 (215 aa).

The disordered stretch occupies residues 134–166 (MAHGSKNHRAPGSIGAGTTPGRVFPGKRMPGRM).

The protein belongs to the universal ribosomal protein uL3 family. Part of the 50S ribosomal subunit. Forms a cluster with proteins L14 and L19.

In terms of biological role, one of the primary rRNA binding proteins, it binds directly near the 3'-end of the 23S rRNA, where it nucleates assembly of the 50S subunit. This chain is Large ribosomal subunit protein uL3, found in Gloeobacter violaceus (strain ATCC 29082 / PCC 7421).